Reading from the N-terminus, the 244-residue chain is Mannose-binding protein C (244 aa).

The N-terminal stretch at 1–18 is a signal peptide; sequence MSIFTSFLLLCVVTVVYA. One can recognise a Collagen-like domain in the interval 38–96; sequence GLNGFPGKDGRDGAKGEKGEPGQGLRGLQGPPGKVGPTGPPGNPGLKGAVGPKGDRGDR. Residues 40–101 form a disordered region; the sequence is NGFPGKDGRD…DRGDRAEFDT (62 aa). Proline 43 carries the 4-hydroxyproline modification. A compositionally biased stretch (basic and acidic residues) spans 45 to 57; that stretch reads KDGRDGAKGEKGE. A 4-hydroxyproline mark is found at proline 58, proline 69, proline 78, and proline 81. Low complexity predominate over residues 65–74; sequence LQGPPGKVGP. The span at 90-99 shows a compositional bias: basic and acidic residues; that stretch reads KGDRGDRAEF. Residues 108-126 adopt a coiled-coil conformation; it reads IAALRSELRALRNWVLFSL. One can recognise a C-type lectin domain in the interval 129 to 241; it reads KVGKKYFVSS…CSDSFLAICE (113 aa). 2 disulfide bridges follow: cysteine 151-cysteine 240 and cysteine 218-cysteine 232. A glycan (N-linked (GlcNAc...) asparagine) is linked at asparagine 210.

In terms of assembly, oligomeric complex of 3 or more homotrimers. Interacts with MASP1 and MASP2. Interacts with MEP1A and MEP1B and may inhibit their catalytic activity. Post-translationally, hydroxylation on proline residues within the sequence motif, GXPG, is most likely to be 4-hydroxy as this fits the requirement for 4-hydroxylation in vertebrates.

It localises to the secreted. Functionally, calcium-dependent lectin involved in innate immune defense. Binds mannose, fucose and N-acetylglucosamine on different microorganisms and activates the lectin complement pathway. Binds to late apoptotic cells, as well as to apoptotic blebs and to necrotic cells, but not to early apoptotic cells, facilitating their uptake by macrophages. The chain is Mannose-binding protein C (Mbl2) from Mus musculus (Mouse).